The chain runs to 143 residues: 16 kDa calcium-binding protein (143 aa).

EF-hand domains follow at residues 2-37 (SEEK…VGVC), 41-71 (ADKI…LPPR), 73-108 (KCVA…SGMD), and 109-143 (IDQN…QTYK). D15, D17, N19, E26, D49, N51, D53, K55, E60, D86, D88, S90, K92, E97, D122, N124, D126, E128, and E133 together coordinate Ca(2+).

In terms of tissue distribution, found in eggs.

Its function is as follows. Calcium-binding protein. The sequence is that of 16 kDa calcium-binding protein from Schistosoma mansoni (Blood fluke).